An 89-amino-acid polypeptide reads, in one-letter code: Small ribosomal subunit protein uS15 (89 aa).

The protein belongs to the universal ribosomal protein uS15 family. In terms of assembly, part of the 30S ribosomal subunit. Forms a bridge to the 50S subunit in the 70S ribosome, contacting the 23S rRNA.

Its function is as follows. One of the primary rRNA binding proteins, it binds directly to 16S rRNA where it helps nucleate assembly of the platform of the 30S subunit by binding and bridging several RNA helices of the 16S rRNA. Functionally, forms an intersubunit bridge (bridge B4) with the 23S rRNA of the 50S subunit in the ribosome. This is Small ribosomal subunit protein uS15 from Ectopseudomonas mendocina (strain ymp) (Pseudomonas mendocina).